Here is a 119-residue protein sequence, read N- to C-terminus: MORF4 family associated protein 1 like 2 (119 aa).

Residues 1-16 show a composition bias toward basic and acidic residues; it reads MRPVDADEAREPREEP. The disordered stretch occupies residues 1 to 36; that stretch reads MRPVDADEAREPREEPGSPLSPAPRAGRENLASLER.

This sequence belongs to the MORF4 family-associated protein family. In terms of assembly, may interact with CDK2AP1.

In terms of biological role, may play a role in cell proliferation. In Homo sapiens (Human), this protein is MORF4 family associated protein 1 like 2.